Here is a 634-residue protein sequence, read N- to C-terminus: 3-dehydroshikimate dehydratase (634 aa).

A divalent metal cation contacts are provided by E134, D165, Q191, and E239. VOC domains lie at 295–414 (GIEF…LVER) and 440–590 (RVDH…VFTE). The Mg(2+) site is built by H443, H521, and E599.

The protein belongs to the bacterial two-domain DSD family. As to quaternary structure, homodimer. Co(2+) serves as cofactor. Requires Ni(2+) as cofactor. The cofactor is Mg(2+). It depends on Mn(2+) as a cofactor.

The enzyme catalyses 3-dehydroshikimate = 3,4-dihydroxybenzoate + H2O. Its pathway is aromatic compound metabolism; 3,4-dihydroxybenzoate biosynthesis. In terms of biological role, catalyzes the conversion of 3-dehydroshikimate to protocatechuate (3,4-dihydroxybenzoate), a common intermediate of quinate and shikimate degradation pathways. Is required for growth on either quinate or shikimate as a sole carbon source. The polypeptide is 3-dehydroshikimate dehydratase (Pseudomonas aeruginosa (strain ATCC 15692 / DSM 22644 / CIP 104116 / JCM 14847 / LMG 12228 / 1C / PRS 101 / PAO1)).